A 469-amino-acid polypeptide reads, in one-letter code: Adenosylhomocysteinase (469 aa).

3 residues coordinate substrate: T58, D133, and E195. Position 196 to 198 (196 to 198) interacts with NAD(+); sequence TTT. Positions 225 and 229 each coordinate substrate. NAD(+) contacts are provided by residues N230, 259–264, E282, N317, 338–340, and N383; these read GFGDVG and IGH.

The protein belongs to the adenosylhomocysteinase family. NAD(+) is required as a cofactor.

It localises to the cytoplasm. The enzyme catalyses S-adenosyl-L-homocysteine + H2O = L-homocysteine + adenosine. Its pathway is amino-acid biosynthesis; L-homocysteine biosynthesis; L-homocysteine from S-adenosyl-L-homocysteine: step 1/1. Functionally, may play a key role in the regulation of the intracellular concentration of adenosylhomocysteine. The sequence is that of Adenosylhomocysteinase from Rhodopseudomonas palustris (strain ATCC BAA-98 / CGA009).